The sequence spans 396 residues: Enoyl-[acyl-carrier-protein] reductase [NADH] (396 aa).

NAD(+)-binding positions include 47–52 (GASTGF), 73–74 (FE), 110–111 (DA), and 138–139 (LA). Position 224 (tyrosine 224) interacts with substrate. The active-site Proton donor is tyrosine 234. NAD(+)-binding positions include lysine 243 and 272-274 (LVT).

Belongs to the TER reductase family. Monomer.

The enzyme catalyses a 2,3-saturated acyl-[ACP] + NAD(+) = a (2E)-enoyl-[ACP] + NADH + H(+). The protein operates within lipid metabolism; fatty acid biosynthesis. Its function is as follows. Involved in the final reduction of the elongation cycle of fatty acid synthesis (FAS II). Catalyzes the reduction of a carbon-carbon double bond in an enoyl moiety that is covalently linked to an acyl carrier protein (ACP). The chain is Enoyl-[acyl-carrier-protein] reductase [NADH] from Flavobacterium psychrophilum (strain ATCC 49511 / DSM 21280 / CIP 103535 / JIP02/86).